The sequence spans 322 residues: 4-hydroxy-3-methylbut-2-enyl diphosphate reductase (322 aa).

Cys-15 contributes to the [4Fe-4S] cluster binding site. Residues His-44 and His-77 each coordinate (2E)-4-hydroxy-3-methylbut-2-enyl diphosphate. 2 residues coordinate dimethylallyl diphosphate: His-44 and His-77. The isopentenyl diphosphate site is built by His-44 and His-77. A [4Fe-4S] cluster-binding site is contributed by Cys-99. Position 127 (His-127) interacts with (2E)-4-hydroxy-3-methylbut-2-enyl diphosphate. His-127 is a binding site for dimethylallyl diphosphate. An isopentenyl diphosphate-binding site is contributed by His-127. The Proton donor role is filled by Glu-129. (2E)-4-hydroxy-3-methylbut-2-enyl diphosphate is bound at residue Thr-168. Position 198 (Cys-198) interacts with [4Fe-4S] cluster. (2E)-4-hydroxy-3-methylbut-2-enyl diphosphate contacts are provided by Ser-226, Ser-227, Asn-228, and Ser-270. Positions 226, 227, 228, and 270 each coordinate dimethylallyl diphosphate. Residues Ser-226, Ser-227, Asn-228, and Ser-270 each contribute to the isopentenyl diphosphate site.

The protein belongs to the IspH family. [4Fe-4S] cluster serves as cofactor.

The enzyme catalyses isopentenyl diphosphate + 2 oxidized [2Fe-2S]-[ferredoxin] + H2O = (2E)-4-hydroxy-3-methylbut-2-enyl diphosphate + 2 reduced [2Fe-2S]-[ferredoxin] + 2 H(+). The catalysed reaction is dimethylallyl diphosphate + 2 oxidized [2Fe-2S]-[ferredoxin] + H2O = (2E)-4-hydroxy-3-methylbut-2-enyl diphosphate + 2 reduced [2Fe-2S]-[ferredoxin] + 2 H(+). It functions in the pathway isoprenoid biosynthesis; dimethylallyl diphosphate biosynthesis; dimethylallyl diphosphate from (2E)-4-hydroxy-3-methylbutenyl diphosphate: step 1/1. The protein operates within isoprenoid biosynthesis; isopentenyl diphosphate biosynthesis via DXP pathway; isopentenyl diphosphate from 1-deoxy-D-xylulose 5-phosphate: step 6/6. Its function is as follows. Catalyzes the conversion of 1-hydroxy-2-methyl-2-(E)-butenyl 4-diphosphate (HMBPP) into a mixture of isopentenyl diphosphate (IPP) and dimethylallyl diphosphate (DMAPP). Acts in the terminal step of the DOXP/MEP pathway for isoprenoid precursor biosynthesis. The protein is 4-hydroxy-3-methylbut-2-enyl diphosphate reductase of Neisseria gonorrhoeae (strain ATCC 700825 / FA 1090).